The sequence spans 230 residues: Cytochrome c oxidase subunit 2 (230 aa).

At 1–14 (MAHPSQLGFQDAAS) the chain is on the mitochondrial intermembrane side. Residues 15–45 (PVMEELLHFHDHALMIVLLISTLVLYIIVAM) form a helical membrane-spanning segment. Residues 46-59 (VSTKLTNKYILDSQ) lie on the Mitochondrial matrix side of the membrane. Residues 60-87 (EIEIVWTVLPAVILILIALPSLRILYLM) form a helical membrane-spanning segment. Residues 88–230 (DEINDPHLTI…KWSTMMLEDA (143 aa)) are Mitochondrial intermembrane-facing. Positions 161, 196, 198, 200, 204, and 207 each coordinate Cu cation. E198 lines the Mg(2+) pocket.

Belongs to the cytochrome c oxidase subunit 2 family. As to quaternary structure, component of the cytochrome c oxidase (complex IV, CIV), a multisubunit enzyme composed of 14 subunits. The complex is composed of a catalytic core of 3 subunits MT-CO1, MT-CO2 and MT-CO3, encoded in the mitochondrial DNA, and 11 supernumerary subunits COX4I, COX5A, COX5B, COX6A, COX6B, COX6C, COX7A, COX7B, COX7C, COX8 and NDUFA4, which are encoded in the nuclear genome. The complex exists as a monomer or a dimer and forms supercomplexes (SCs) in the inner mitochondrial membrane with NADH-ubiquinone oxidoreductase (complex I, CI) and ubiquinol-cytochrome c oxidoreductase (cytochrome b-c1 complex, complex III, CIII), resulting in different assemblies (supercomplex SCI(1)III(2)IV(1) and megacomplex MCI(2)III(2)IV(2)). Found in a complex with TMEM177, COA6, COX18, COX20, SCO1 and SCO2. Interacts with TMEM177 in a COX20-dependent manner. Interacts with COX20. Interacts with COX16. It depends on Cu cation as a cofactor.

It localises to the mitochondrion inner membrane. It catalyses the reaction 4 Fe(II)-[cytochrome c] + O2 + 8 H(+)(in) = 4 Fe(III)-[cytochrome c] + 2 H2O + 4 H(+)(out). Component of the cytochrome c oxidase, the last enzyme in the mitochondrial electron transport chain which drives oxidative phosphorylation. The respiratory chain contains 3 multisubunit complexes succinate dehydrogenase (complex II, CII), ubiquinol-cytochrome c oxidoreductase (cytochrome b-c1 complex, complex III, CIII) and cytochrome c oxidase (complex IV, CIV), that cooperate to transfer electrons derived from NADH and succinate to molecular oxygen, creating an electrochemical gradient over the inner membrane that drives transmembrane transport and the ATP synthase. Cytochrome c oxidase is the component of the respiratory chain that catalyzes the reduction of oxygen to water. Electrons originating from reduced cytochrome c in the intermembrane space (IMS) are transferred via the dinuclear copper A center (CU(A)) of subunit 2 and heme A of subunit 1 to the active site in subunit 1, a binuclear center (BNC) formed by heme A3 and copper B (CU(B)). The BNC reduces molecular oxygen to 2 water molecules using 4 electrons from cytochrome c in the IMS and 4 protons from the mitochondrial matrix. This Salmo salar (Atlantic salmon) protein is Cytochrome c oxidase subunit 2 (mt-co2).